The sequence spans 196 residues: UPF0215 protein MA_4269 (196 aa).

Belongs to the UPF0215 family.

The protein is UPF0215 protein MA_4269 of Methanosarcina acetivorans (strain ATCC 35395 / DSM 2834 / JCM 12185 / C2A).